The sequence spans 228 residues: Putative L-ribulose-5-phosphate 4-epimerase UlaF (228 aa).

Substrate is bound by residues 26–27 (GN), 43–44 (SG), and 72–73 (SS). Positions 74, 93, and 95 each coordinate Zn(2+). Asp-118 acts as the Proton donor/acceptor in catalysis. His-167 contributes to the Zn(2+) binding site. The active-site Proton donor/acceptor is the Tyr-225.

Belongs to the aldolase class II family. AraD/FucA subfamily. The cofactor is Zn(2+).

The enzyme catalyses L-ribulose 5-phosphate = D-xylulose 5-phosphate. It participates in cofactor degradation; L-ascorbate degradation; D-xylulose 5-phosphate from L-ascorbate: step 4/4. Catalyzes the isomerization of L-ribulose 5-phosphate to D-xylulose 5-phosphate. Is involved in the anaerobic L-ascorbate utilization. This chain is Putative L-ribulose-5-phosphate 4-epimerase UlaF, found in Shigella boydii serotype 4 (strain Sb227).